The following is a 250-amino-acid chain: Isoprenyl transferase (250 aa).

Residue D27 is part of the active site. Residue D27 coordinates Mg(2+). Substrate-binding positions include 28-31 (GNRR), W32, H48, and 76-78 (STE). The Proton acceptor role is filled by N79. Substrate contacts are provided by residues F80, R82, R199, and 205 to 207 (RVS). E218 is a Mg(2+) binding site.

The protein belongs to the UPP synthase family. In terms of assembly, homodimer. Mg(2+) serves as cofactor.

Its function is as follows. Catalyzes the condensation of isopentenyl diphosphate (IPP) with allylic pyrophosphates generating different type of terpenoids. This is Isoprenyl transferase from Chlamydia pneumoniae (Chlamydophila pneumoniae).